Consider the following 532-residue polypeptide: Probable NAD kinase 1 (532 aa).

Residues 1-26 (MSLDELPHKVSDERVNHDTVTSHESE) show a composition bias toward basic and acidic residues. The disordered stretch occupies residues 1 to 32 (MSLDELPHKVSDERVNHDTVTSHESEIGSGSI).

This sequence belongs to the NAD kinase family.

It catalyses the reaction NAD(+) + ATP = ADP + NADP(+) + H(+). This chain is Probable NAD kinase 1, found in Oryza sativa subsp. japonica (Rice).